A 338-amino-acid chain; its full sequence is RNA 3'-terminal phosphate cyclase (338 aa).

ATP contacts are provided by residues Q103 and 283–287 (YLADQ). H308 functions as the Tele-AMP-histidine intermediate in the catalytic mechanism.

Belongs to the RNA 3'-terminal cyclase family. Type 1 subfamily.

Its subcellular location is the cytoplasm. It carries out the reaction a 3'-end 3'-phospho-ribonucleotide-RNA + ATP = a 3'-end 2',3'-cyclophospho-ribonucleotide-RNA + AMP + diphosphate. In terms of biological role, catalyzes the conversion of 3'-phosphate to a 2',3'-cyclic phosphodiester at the end of RNA. The mechanism of action of the enzyme occurs in 3 steps: (A) adenylation of the enzyme by ATP; (B) transfer of adenylate to an RNA-N3'P to produce RNA-N3'PP5'A; (C) and attack of the adjacent 2'-hydroxyl on the 3'-phosphorus in the diester linkage to produce the cyclic end product. The biological role of this enzyme is unknown but it is likely to function in some aspects of cellular RNA processing. The protein is RNA 3'-terminal phosphate cyclase of Escherichia coli O81 (strain ED1a).